Reading from the N-terminus, the 256-residue chain is Capsid protein (256 aa).

A Bipartite nuclear localization signal motif is present at residues 3–20 (KRPADIIISTPGSKVRRR). The Nuclear localization signal motif lies at 40–54 (KRQSWTNRPINRKPR). A zinc finger spans residues 68–85 (CEGPCKVQSFESRHDVVH). The short motif at 101–122 (LTHRVGKRFCVKSIYILGKIWM) is the Nuclear export signal element. The Bipartite nuclear localization signal signature appears at 200 to 247 (RRFFRVNNYVVYNQQEAGKYENHTENALMLYMACTHASNPVYATLKIR).

This sequence belongs to the geminiviridae capsid protein family. Homomultimer. Binds to single-stranded and double-stranded viral DNA. Interacts (via nuclear localization signals) with host importin alpha-1a.

Its subcellular location is the virion. It is found in the host nucleus. Encapsidates the viral DNA into characteristic twinned ('geminate') particles. Binds the genomic viral ssDNA and shuttles it into and out of the cell nucleus. The CP of bipartite geminiviruses is not required for cell-to-cell or systemic movement. The sequence is that of Capsid protein from Manihot esculenta (Cassava).